A 479-amino-acid polypeptide reads, in one-letter code: Ribosomal RNA small subunit methyltransferase F (479 aa).

S-adenosyl-L-methionine is bound by residues 125–131 (AAAPGSK), glutamate 149, aspartate 176, and aspartate 194. The Nucleophile role is filled by cysteine 247.

Belongs to the class I-like SAM-binding methyltransferase superfamily. RsmB/NOP family.

The protein resides in the cytoplasm. The enzyme catalyses cytidine(1407) in 16S rRNA + S-adenosyl-L-methionine = 5-methylcytidine(1407) in 16S rRNA + S-adenosyl-L-homocysteine + H(+). Functionally, specifically methylates the cytosine at position 1407 (m5C1407) of 16S rRNA. This Escherichia coli O17:K52:H18 (strain UMN026 / ExPEC) protein is Ribosomal RNA small subunit methyltransferase F.